The following is a 473-amino-acid chain: Photosystem II CP43 reaction center protein (473 aa).

Residues 1–14 constitute a propeptide that is removed on maturation; the sequence is MKILYSLRRFYHVE. Thr15 is modified (N-acetylthreonine). Thr15 bears the Phosphothreonine mark. Helical transmembrane passes span 69-93, 134-155, 178-200, 255-275, and 291-312; these read LFEV…PHLA, LLGP…KDRN, KALY…RKIT, KPFA…LSYS, and WFNN…ASQA. Position 367 (Glu367) interacts with [CaMn4O5] cluster. A helical membrane pass occupies residues 447 to 471; that stretch reads RARAAAAGFEKGIDRDLEPVLYMTP.

It belongs to the PsbB/PsbC family. PsbC subfamily. PSII is composed of 1 copy each of membrane proteins PsbA, PsbB, PsbC, PsbD, PsbE, PsbF, PsbH, PsbI, PsbJ, PsbK, PsbL, PsbM, PsbT, PsbX, PsbY, PsbZ, Psb30/Ycf12, at least 3 peripheral proteins of the oxygen-evolving complex and a large number of cofactors. It forms dimeric complexes. Requires Binds multiple chlorophylls and provides some of the ligands for the Ca-4Mn-5O cluster of the oxygen-evolving complex. It may also provide a ligand for a Cl- that is required for oxygen evolution. PSII binds additional chlorophylls, carotenoids and specific lipids. as cofactor.

The protein resides in the plastid. It is found in the chloroplast thylakoid membrane. One of the components of the core complex of photosystem II (PSII). It binds chlorophyll and helps catalyze the primary light-induced photochemical processes of PSII. PSII is a light-driven water:plastoquinone oxidoreductase, using light energy to abstract electrons from H(2)O, generating O(2) and a proton gradient subsequently used for ATP formation. The polypeptide is Photosystem II CP43 reaction center protein (Sorghum bicolor (Sorghum)).